The following is a 230-amino-acid chain: Ribonuclease 3 (230 aa).

The region spanning 5–125 is the RNase III domain; it reads YSRFYNILGY…VIGAIYLDSD (121 aa). E40 provides a ligand contact to Mg(2+). D44 is a catalytic residue. Mg(2+) is bound by residues D111 and E114. Residue E114 is part of the active site. The 71-residue stretch at 153 to 223 folds into the DRBM domain; it reads DSKSKLQEIL…AEKMIEMLSQ (71 aa).

Belongs to the ribonuclease III family. As to quaternary structure, homodimer. The cofactor is Mg(2+).

It localises to the cytoplasm. It catalyses the reaction Endonucleolytic cleavage to 5'-phosphomonoester.. Functionally, digests double-stranded RNA. Involved in the processing of primary rRNA transcript to yield the immediate precursors to the large and small rRNAs (23S and 16S). Processes some mRNAs, and tRNAs when they are encoded in the rRNA operon. Processes pre-crRNA and tracrRNA of type II CRISPR loci if present in the organism. This is Ribonuclease 3 from Francisella tularensis subsp. holarctica (strain FTNF002-00 / FTA).